The primary structure comprises 1040 residues: Beta-galactosidase (1040 aa).

N111 and D210 together coordinate substrate. D210 contacts Na(+). 3 residues coordinate Mg(2+): E427, H429, and E472. Substrate-binding positions include E472 and 548–551 (EYAH). The active-site Proton donor is the E472. E548 (nucleophile) is an active-site residue. N608 is a binding site for Mg(2+). Positions 612 and 615 each coordinate Na(+). Substrate-binding residues include D615 and W1016.

This sequence belongs to the glycosyl hydrolase 2 family. In terms of assembly, homotetramer. Mg(2+) serves as cofactor. The cofactor is Na(+).

The enzyme catalyses Hydrolysis of terminal non-reducing beta-D-galactose residues in beta-D-galactosides.. This chain is Beta-galactosidase, found in Pectobacterium atrosepticum (strain SCRI 1043 / ATCC BAA-672) (Erwinia carotovora subsp. atroseptica).